Consider the following 745-residue polypeptide: Isocitrate dehydrogenase [NADP] 2 (745 aa).

NADP(+)-binding residues include asparagine 87 and serine 89. 5 residues coordinate D-threo-isocitrate: serine 134, asparagine 137, arginine 141, arginine 147, and lysine 257. Aspartate 352 lines the Mg(2+) pocket. 2 residues coordinate D-threo-isocitrate: tyrosine 422 and arginine 550. Residues aspartate 551 and aspartate 555 each coordinate Mg(2+). The NADP(+) site is built by glycine 587, serine 588, alanine 589, histidine 592, arginine 603, aspartate 605, and arginine 652.

The protein belongs to the monomeric-type IDH family. As to quaternary structure, may form homotrimers. Also forms homotetramers at low salt concentration, which are dissociated into homodimers, but not into monomers, at high salt concentration (1 M). Requires Mg(2+) as cofactor.

The enzyme catalyses D-threo-isocitrate + NADP(+) = 2-oxoglutarate + CO2 + NADPH. Its function is as follows. Catalyzes the oxidative decarboxylation of isocitrate to 2-oxoglutarate and carbon dioxide with the concomitant reduction of NADP(+). Cannot use NAD(+). The polypeptide is Isocitrate dehydrogenase [NADP] 2 (Mycobacterium tuberculosis (strain ATCC 25618 / H37Rv)).